A 505-amino-acid polypeptide reads, in one-letter code: 2,3-bisphosphoglycerate-independent phosphoglycerate mutase (505 aa).

Mn(2+)-binding residues include D15 and S65. The active-site Phosphoserine intermediate is the S65. Substrate-binding positions include H126, 156–157 (RD), R187, R193, 260–263 (RPDR), and K333. Residues D398, H402, D439, H440, and H457 each contribute to the Mn(2+) site.

The protein belongs to the BPG-independent phosphoglycerate mutase family. As to quaternary structure, monomer. The cofactor is Mn(2+).

It catalyses the reaction (2R)-2-phosphoglycerate = (2R)-3-phosphoglycerate. Its pathway is carbohydrate degradation; glycolysis; pyruvate from D-glyceraldehyde 3-phosphate: step 3/5. Functionally, catalyzes the interconversion of 2-phosphoglycerate and 3-phosphoglycerate. In Mycoplasmopsis pulmonis (strain UAB CTIP) (Mycoplasma pulmonis), this protein is 2,3-bisphosphoglycerate-independent phosphoglycerate mutase.